The sequence spans 318 residues: Sensor histidine kinase NatK (318 aa).

The next 3 membrane-spanning stretches (helical) occupy residues 4–24 (LFQCLYLILFSFICYQGAAAF), 27–47 (STAASWLAAALGAAAAGLYIW), and 72–82 (VGVVLIGTDIM). Residues 132–318 (RNHDTMKHIT…RLEIKIPFQK (187 aa)) enclose the Histidine kinase domain. H134 carries the post-translational modification Phosphohistidine; by autocatalysis.

It localises to the cell membrane. It catalyses the reaction ATP + protein L-histidine = ADP + protein N-phospho-L-histidine.. In terms of biological role, member of the two-component regulatory system NatK/NatR that positively regulates the expression of the natAB operon. Potentially phosphorylates NatR. In Bacillus subtilis (strain 168), this protein is Sensor histidine kinase NatK.